Reading from the N-terminus, the 301-residue chain is Glycine--tRNA ligase alpha subunit (301 aa).

It belongs to the class-II aminoacyl-tRNA synthetase family. In terms of assembly, tetramer of two alpha and two beta subunits.

Its subcellular location is the cytoplasm. The catalysed reaction is tRNA(Gly) + glycine + ATP = glycyl-tRNA(Gly) + AMP + diphosphate. This Shewanella loihica (strain ATCC BAA-1088 / PV-4) protein is Glycine--tRNA ligase alpha subunit.